A 334-amino-acid chain; its full sequence is Probable GTP 3',8-cyclase (334 aa).

The Radical SAM core domain occupies 24–256 (PYGRKVTGLR…RKKYMIDGVE (233 aa)). R33 is a binding site for GTP. Residues C40 and C44 each coordinate [4Fe-4S] cluster. Y46 is an S-adenosyl-L-methionine binding site. [4Fe-4S] cluster is bound at residue C47. Residue K85 coordinates GTP. G89 provides a ligand contact to S-adenosyl-L-methionine. T113 is a binding site for GTP. S137 serves as a coordination point for S-adenosyl-L-methionine. K176 is a GTP binding site. Residues C269 and C272 each contribute to the [4Fe-4S] cluster site. 274-276 (RLR) is a binding site for GTP. C286 provides a ligand contact to [4Fe-4S] cluster.

The protein belongs to the radical SAM superfamily. MoaA family. [4Fe-4S] cluster serves as cofactor.

It carries out the reaction GTP + AH2 + S-adenosyl-L-methionine = (8S)-3',8-cyclo-7,8-dihydroguanosine 5'-triphosphate + 5'-deoxyadenosine + L-methionine + A + H(+). Its pathway is cofactor biosynthesis; molybdopterin biosynthesis. Its function is as follows. Catalyzes the cyclization of GTP to (8S)-3',8-cyclo-7,8-dihydroguanosine 5'-triphosphate. The chain is Probable GTP 3',8-cyclase from Methanosarcina mazei (strain ATCC BAA-159 / DSM 3647 / Goe1 / Go1 / JCM 11833 / OCM 88) (Methanosarcina frisia).